The chain runs to 371 residues: Phospho-N-acetylmuramoyl-pentapeptide-transferase (371 aa).

The next 10 membrane-spanning stretches (helical) occupy residues 25 to 45 (YLTF…VAMG), 79 to 99 (TMGG…FADL), 104 to 124 (VWVV…DDYA), 139 to 159 (KLIA…IFAP), 179 to 199 (LVIN…AGFS), 210 to 230 (GLAI…AYLV), 247 to 267 (VGEL…FLWY), 274 to 294 (IFMG…IAVC), 299 to 319 (LVLG…MIQV), and 348 to 368 (TVVI…LATL).

Belongs to the glycosyltransferase 4 family. MraY subfamily. It depends on Mg(2+) as a cofactor.

It localises to the cell inner membrane. The enzyme catalyses UDP-N-acetyl-alpha-D-muramoyl-L-alanyl-gamma-D-glutamyl-meso-2,6-diaminopimeloyl-D-alanyl-D-alanine + di-trans,octa-cis-undecaprenyl phosphate = di-trans,octa-cis-undecaprenyl diphospho-N-acetyl-alpha-D-muramoyl-L-alanyl-D-glutamyl-meso-2,6-diaminopimeloyl-D-alanyl-D-alanine + UMP. It functions in the pathway cell wall biogenesis; peptidoglycan biosynthesis. Functionally, catalyzes the initial step of the lipid cycle reactions in the biosynthesis of the cell wall peptidoglycan: transfers peptidoglycan precursor phospho-MurNAc-pentapeptide from UDP-MurNAc-pentapeptide onto the lipid carrier undecaprenyl phosphate, yielding undecaprenyl-pyrophosphoryl-MurNAc-pentapeptide, known as lipid I. The polypeptide is Phospho-N-acetylmuramoyl-pentapeptide-transferase (Caulobacter sp. (strain K31)).